A 270-amino-acid polypeptide reads, in one-letter code: Tryptophan synthase alpha chain (270 aa).

Catalysis depends on proton acceptor residues E49 and D60.

It belongs to the TrpA family. In terms of assembly, tetramer of two alpha and two beta chains.

The enzyme catalyses (1S,2R)-1-C-(indol-3-yl)glycerol 3-phosphate + L-serine = D-glyceraldehyde 3-phosphate + L-tryptophan + H2O. The protein operates within amino-acid biosynthesis; L-tryptophan biosynthesis; L-tryptophan from chorismate: step 5/5. In terms of biological role, the alpha subunit is responsible for the aldol cleavage of indoleglycerol phosphate to indole and glyceraldehyde 3-phosphate. The sequence is that of Tryptophan synthase alpha chain from Thermobifida fusca (strain YX).